The chain runs to 22 residues: Bacteriocin serracin-P 23 kDa subunit (22 aa).

In terms of biological role, major component of a prophage tail tube. Antibacterial activity against Gram-negative bacterium E.amylovora. This chain is Bacteriocin serracin-P 23 kDa subunit, found in Serratia plymuthica.